Here is a 293-residue protein sequence, read N- to C-terminus: 4-hydroxy-tetrahydrodipicolinate synthase (293 aa).

Position 45 (threonine 45) interacts with pyruvate. Catalysis depends on tyrosine 133, which acts as the Proton donor/acceptor. Residue lysine 161 is the Schiff-base intermediate with substrate of the active site. Isoleucine 203 is a binding site for pyruvate.

It belongs to the DapA family. Homotetramer; dimer of dimers.

Its subcellular location is the cytoplasm. The catalysed reaction is L-aspartate 4-semialdehyde + pyruvate = (2S,4S)-4-hydroxy-2,3,4,5-tetrahydrodipicolinate + H2O + H(+). Its pathway is amino-acid biosynthesis; L-lysine biosynthesis via DAP pathway; (S)-tetrahydrodipicolinate from L-aspartate: step 3/4. Functionally, catalyzes the condensation of (S)-aspartate-beta-semialdehyde [(S)-ASA] and pyruvate to 4-hydroxy-tetrahydrodipicolinate (HTPA). The polypeptide is 4-hydroxy-tetrahydrodipicolinate synthase (Shewanella piezotolerans (strain WP3 / JCM 13877)).